Reading from the N-terminus, the 688-residue chain is MAKIKKKGTSGAAKNYITRTQAVRKLQISLPDFRRLCIFKGIYPREPRNKKKASKTSTPSTTFYYTRDIQYLLHEPLLKRFRDQKALSKKIARSLGRGDVGDAARLEKNNAPKITLDHIVKERYPTFIDALRDLDDALSLLFLFANLPSTANVPPKTIALCQRLCHEFQHYLIATNSLRKSFLSIKGIYYQATIQGQDILWLVPYRFVQQVTGDVDYRIMATFVEFYTTLLGFVNFRLYTSIGLVYPPKFDSRSDERGAELAAFTLEGRKVGEMQKAISSEPQTNGQLAKSDSAANDIQAKVDNILKETTRNNEPDDEAVDVEDNVDAIDKFETTAPEADTLPQPQMSGNEVASLFASFTFFISREAPRGPLEFLLRAFGCKRVGWDAVLGEGAFTHDETDPRITHQIVDRPPLPESALPPLPQNPGEGAEKAPRVRPGTRMPGRMYIQPQWVWDCVNEGKLLRHDLYAPGATLPPHLSPWVKASKGGYDPRLSLAEQESDGEAERQAEEENEEEESEVEGLSMDKEMVETENSEAGESDEESVDGGMDVDIPGSDDEEEESEEDNALRELGGSDEAADVQSESEDDEEAARNQHQMELEAEAAGLPFTGADGTGTSSKKSKKQKPLAKKHAAQKKKEQEELERQKMMMSRKKRKLLDKMLYSNKKKDEEAEKLRRKRRKIEQGTKGR.

Residues 351-470 (EVASLFASFT…KLLRHDLYAP (120 aa)) form the BRCT domain. Disordered regions lie at residues 411–442 (RPPL…GTRM) and 496–688 (AEQE…TKGR). Positions 412–424 (PPLPESALPPLPQ) are enriched in pro residues. A coiled-coil region spans residues 496–536 (AEQESDGEAERQAEEENEEEESEVEGLSMDKEMVETENSEA). 4 stretches are compositionally biased toward acidic residues: residues 510-519 (EENEEEESEV), 530-544 (ETEN…EESV), 554-565 (GSDDEEEESEED), and 576-589 (EAAD…DDEE). Over residues 619–634 (KKSKKQKPLAKKHAAQ) the composition is skewed to basic residues. Positions 627-686 (LAKKHAAQKKKEQEELERQKMMMSRKKRKLLDKMLYSNKKKDEEAEKLRRKRRKIEQGTK) form a coiled coil. Over residues 635–646 (KKKEQEELERQK) the composition is skewed to basic and acidic residues.

It belongs to the pescadillo family. As to quaternary structure, component of the NOP7 complex, composed of ERB1, NOP7 and YTM1. The complex is held together by ERB1, which interacts with NOP7 via its N-terminal domain and with YTM1 via a high-affinity interaction between the seven-bladed beta-propeller domains of the 2 proteins. The NOP7 complex associates with the 66S pre-ribosome.

Its subcellular location is the nucleus. It is found in the nucleolus. The protein localises to the nucleoplasm. Functionally, component of the NOP7 complex, which is required for maturation of the 25S and 5.8S ribosomal RNAs and formation of the 60S ribosome. The chain is Pescadillo homolog from Coccidioides immitis (strain RS) (Valley fever fungus).